The following is a 306-amino-acid chain: Oligopeptide transport system permease protein OppB (306 aa).

Residues 1–11 lie on the Cytoplasmic side of the membrane; sequence MLKFILRRCLE. The helical transmembrane segment at 12–32 threads the bilayer; the sequence is AIPTLFILITISFFMMRLAPG. The Periplasmic segment spans residues 33-99; it reads SPFTGERTLP…VASSFPVSAK (67 aa). The 200-residue stretch at 94–293 folds into the ABC transmembrane type-1 domain; it reads FPVSAKLGAA…ALTILFNAIV (200 aa). A helical transmembrane segment spans residues 100–120; sequence LGAAAFFLAVILGVSAGVIAA. The Cytoplasmic portion of the chain corresponds to 121-137; that stretch reads LKQNTKWDYTVMGLAMT. Residues 138-158 traverse the membrane as a helical segment; it reads GVVIPSFVVAPLLVMIFAIIL. Topologically, residues 159–169 are periplasmic; that stretch reads HWLPGGGWNGG. Residues 170-190 form a helical membrane-spanning segment; sequence ALKFMILPMVALSLAYIASIA. The Cytoplasmic portion of the chain corresponds to 191-229; that stretch reads RITRGSMIEVLHSNFIRTARAKGLPMRRIILRHALKPAL. The chain crosses the membrane as a helical span at residues 230-250; the sequence is LPVLSYMGPAFVGIITGSMVI. Over 251-279 the chain is Periplasmic; that stretch reads ETIYGLPGIGQLFVNGALNRDYSLVLSLT. The helical transmembrane segment at 280–300 threads the bilayer; sequence ILVGALTILFNAIVDVLYAVI. Topologically, residues 301–306 are cytoplasmic; that stretch reads DPKIRY.

Belongs to the binding-protein-dependent transport system permease family. OppBC subfamily. As to quaternary structure, the complex is composed of two ATP-binding proteins (OppD and OppF), two transmembrane proteins (OppB and OppC) and a solute-binding protein (OppA).

It is found in the cell inner membrane. Its function is as follows. Part of the ABC transporter complex OppABCDF involved in the uptake of oligopeptides. Probably responsible for the translocation of the substrate across the membrane. This is Oligopeptide transport system permease protein OppB (oppB) from Shigella flexneri.